The sequence spans 558 residues: Cytochrome c oxidase subunit 1-beta (558 aa).

Topologically, residues 1–28 (MADAAVHGHGDHHDTRGFFTRWFMSTNH) are cytoplasmic. The chain crosses the membrane as a helical span at residues 29-59 (KDIGILYLFTAGIVGLISVCFTVYMRMELQH). Residues 60 to 82 (PGVQYMCLEGARLIADASAECTP) are Periplasmic-facing. Cys-66 and Cys-80 are joined by a disulfide. A helical membrane pass occupies residues 83–120 (NGHLWNVMITYHGVLMMFFVVIPALFGGFGNYFMPLHI). A Fe(II)-heme a-binding site is contributed by His-94. The Cytoplasmic segment spans residues 121 to 126 (GAPDMA). The helical transmembrane segment at 127–151 (FPRLNNLSYWMYVCGVALGVASLLA) threads the bilayer. Residues 152–176 (PGGNDQMGSGVGWVLYPPLSTTEAG) are Periplasmic-facing. The chain crosses the membrane as a helical span at residues 177 to 206 (YSMDLAIFAVHVSGASSILGAINIITTFLN). Residues 207 to 217 (MRAPGMTLFKV) lie on the Cytoplasmic side of the membrane. The chain crosses the membrane as a helical span at residues 218–251 (PLFAWSVFITAWLILLSLPVLAGAITMLLMDRNF). At 252-262 (GTQFFDPAGGG) the chain is on the periplasmic side. The chain crosses the membrane as a helical span at residues 263-299 (DPVLYQHILWFFGHPEVYIIILPGFGIISHVISTFAK). Cu cation-binding residues include His-276 and Tyr-280. The 1'-histidyl-3'-tyrosine (His-Tyr) cross-link spans 276–280 (HPEVY). Topologically, residues 300 to 303 (KPIF) are cytoplasmic. The chain crosses the membrane as a helical span at residues 304–331 (GYLPMVLAMAAIGILGFVVWAHHMYTAG). His-325 and His-326 together coordinate Cu cation. A topological domain (periplasmic) is located at residue Met-332. Residues 333-364 (SLTQQAYFMLATMTIAVPTGIKVFSWIATMWG) form a helical membrane-spanning segment. Residues 365-369 (GSIEF) lie on the Cytoplasmic side of the membrane. Residues 370 to 395 (KTPMLWAFGFLFLFTVGGVTGVVLSQ) traverse the membrane as a helical segment. Residues 396–404 (APLDRVYHD) lie on the Periplasmic side of the membrane. A helical membrane pass occupies residues 405–437 (TYYVVAHFHYVMSLGAVFGIFAGVYYWIGKMSG). His-411 lines the heme a3 pocket. His-413 is a Fe(II)-heme a binding site. The Cytoplasmic segment spans residues 438–440 (RQY). Residues 441-469 (PEWAGQLHFWMMFIGSNLIFFPQHFLGRQ) traverse the membrane as a helical segment. At 470-478 (GMPRRYIDY) the chain is on the periplasmic side. A helical transmembrane segment spans residues 479-514 (PVEFAYWNNISSIGAYISFASFLFFIGIVFYTLFAG). The Cytoplasmic segment spans residues 515 to 558 (KRVNVPNYWNEHADTLEWTLPSPPPEHTFETLPKREDWDRAHAH).

It belongs to the heme-copper respiratory oxidase family. Cu(2+) serves as cofactor. The cofactor is heme. In terms of processing, his-276 and Tyr-280 are involved in the formation of a copper-coordinated covalent cross-link at the active site of the catalytic subunit I.

The protein localises to the cell inner membrane. It carries out the reaction 4 Fe(II)-[cytochrome c] + O2 + 8 H(+)(in) = 4 Fe(III)-[cytochrome c] + 2 H2O + 4 H(+)(out). The protein operates within energy metabolism; oxidative phosphorylation. Functionally, subunit I and II form the functional core of the enzyme complex. Electrons originating in cytochrome c are transferred via heme a and Cu(A) to the binuclear center formed by heme a3 and Cu(B). This cytochrome c oxidase shows proton pump activity across the membrane in addition to the electron transfer. The sequence is that of Cytochrome c oxidase subunit 1-beta (ctaDII) from Paracoccus denitrificans.